Reading from the N-terminus, the 468-residue chain is Ribulose bisphosphate carboxylase large chain (468 aa).

K5 carries the N6,N6,N6-trimethyllysine modification. Substrate-binding residues include N114 and T164. The Proton acceptor role is filled by K166. Residue K168 participates in substrate binding. 3 residues coordinate Mg(2+): K192, D194, and E195. K192 is subject to N6-carboxylysine. The active-site Proton acceptor is the H285. The substrate site is built by R286, H318, and S370.

It belongs to the RuBisCO large chain family. Type I subfamily. In terms of assembly, heterohexadecamer of 8 large chains and 8 small chains; disulfide-linked. The disulfide link is formed within the large subunit homodimers. Mg(2+) serves as cofactor. In terms of processing, the disulfide bond which can form in the large chain dimeric partners within the hexadecamer appears to be associated with oxidative stress and protein turnover.

Its subcellular location is the plastid. It localises to the chloroplast. It catalyses the reaction 2 (2R)-3-phosphoglycerate + 2 H(+) = D-ribulose 1,5-bisphosphate + CO2 + H2O. The catalysed reaction is D-ribulose 1,5-bisphosphate + O2 = 2-phosphoglycolate + (2R)-3-phosphoglycerate + 2 H(+). Its function is as follows. RuBisCO catalyzes two reactions: the carboxylation of D-ribulose 1,5-bisphosphate, the primary event in carbon dioxide fixation, as well as the oxidative fragmentation of the pentose substrate in the photorespiration process. Both reactions occur simultaneously and in competition at the same active site. In Anthospermum herbaceum, this protein is Ribulose bisphosphate carboxylase large chain.